A 417-amino-acid chain; its full sequence is DnaJ protein homolog ANJ1 (417 aa).

A J domain is found at 11–76; that stretch reads STRYYEILGV…REIYDQYGED (66 aa). A CR-type zinc finger spans residues 135–219; the sequence is GTTKKLSLSR…CKGEKVVQEK (85 aa). CXXCXGXG motif repeat units lie at residues 148 to 155, 164 to 171, and 191 to 198; these read CSKCTGKG, CSGCQGTG, and CNECKGTG. One copy of the CXXCXGXG motif; approximate repeat lies at 207-214; that stretch reads CPQCKGEK. The segment at 384–417 is disordered; that stretch reads IEEEMKRKQTQAQQEAYDEDDEPAGGQRVQCAQQ. Cys414 carries the post-translational modification Cysteine methyl ester. The S-farnesyl cysteine moiety is linked to residue Cys414. Positions 415-417 are cleaved as a propeptide — removed in mature form; the sequence is AQQ.

The protein resides in the membrane. Plays a continuous role in plant development probably in the structural organization of compartments. The protein is DnaJ protein homolog ANJ1 of Atriplex nummularia (Old man saltbush).